The following is a 192-amino-acid chain: Pyridoxal 5'-phosphate synthase subunit PdxT (192 aa).

47-49 (GES) provides a ligand contact to L-glutamine. The Nucleophile role is filled by Cys79. Residues Arg106 and 134–135 (IR) contribute to the L-glutamine site. Active-site charge relay system residues include His170 and Glu172.

Belongs to the glutaminase PdxT/SNO family. In the presence of PdxS, forms a dodecamer of heterodimers. Only shows activity in the heterodimer.

It carries out the reaction aldehydo-D-ribose 5-phosphate + D-glyceraldehyde 3-phosphate + L-glutamine = pyridoxal 5'-phosphate + L-glutamate + phosphate + 3 H2O + H(+). The catalysed reaction is L-glutamine + H2O = L-glutamate + NH4(+). It participates in cofactor biosynthesis; pyridoxal 5'-phosphate biosynthesis. Catalyzes the hydrolysis of glutamine to glutamate and ammonia as part of the biosynthesis of pyridoxal 5'-phosphate. The resulting ammonia molecule is channeled to the active site of PdxS. This Geobacillus sp. (strain WCH70) protein is Pyridoxal 5'-phosphate synthase subunit PdxT.